We begin with the raw amino-acid sequence, 448 residues long: uncharacterized protein (448 aa).

Residues 1 to 50 lie on the Extracellular side of the membrane; sequence MAPEIFVKFKCASRDIKLLWASVFLRLLSYGLTNQVLTLFLNAINMTEDK. Residues 51-71 form a helical membrane-spanning segment; that stretch reads IGLFMSLTLAGDVICSYILTW. Residues 72-93 lie on the Cytoplasmic side of the membrane; the sequence is YADSWGRRRVLVYGCAMMLLSG. A helical membrane pass occupies residues 94 to 114; that stretch reads LVFSFSENFTLLLVFAIFGVI. Residues 115 to 146 are Extracellular-facing; that stretch reads SPSSDEVGPFKSIEEAMIAHLSPHNARPEIYA. The chain crosses the membrane as a helical span at residues 147–167; sequence IHALVGTIGSALGAIICGIFV. Residues 168 to 184 are Cytoplasmic-facing; that stretch reads DLLKRTGLAATDLQCYK. Residues 185-205 traverse the membrane as a helical segment; that stretch reads LVFLLYAFFAFCKMVIMLLLS. At 206–260 the chain is on the extracellular side; sequence DATELDGHYEHTDCNEETAEPLDVNDETAPLMRQATHPEERSNKLSKETVSVLMK. A helical membrane pass occupies residues 261 to 281; sequence LLVIFMVDSLGSGFMTSGWMV. Over 282 to 287 the chain is Cytoplasmic; the sequence is YYYSKQ. Residues 288 to 308 form a helical membrane-spanning segment; it reads FLMGSLALGTLFFITQLVMAS. Over 309–333 the chain is Extracellular; that stretch reads STIPSSIIARCFGPVRATLLVQIPS. A helical membrane pass occupies residues 334–354; that stretch reads GIFSILIPMAKNYLPLSILFL. The Cytoplasmic portion of the chain corresponds to 355–386; it reads NLHFATTAMDVTPRQILLTNIIKPRDLTKVMG. 386–393 lines the ATP pocket; it reads GVVNIGKT. A helical transmembrane segment spans residues 387 to 407; it reads VVNIGKTFARCVGPIFTGILA. At 408–416 the chain is on the extracellular side; it reads NNNYLWLCY. A helical transmembrane segment spans residues 417-437; it reads IISGSLVITADLILACMFLGV. Topologically, residues 438–448 are cytoplasmic; it reads DAKIKKQMNRH.

It is found in the membrane. This is an uncharacterized protein from Saccharomyces cerevisiae (strain ATCC 204508 / S288c) (Baker's yeast).